Here is a 254-residue protein sequence, read N- to C-terminus: Ribosomal RNA large subunit methyltransferase E (254 aa).

A disordered region spans residues Met1–Gln28. Over residues Leu13–Gly22 the composition is skewed to basic residues. S-adenosyl-L-methionine contacts are provided by Gly80, Trp82, Asp103, Asp119, and Asp143. Lys183 (proton acceptor) is an active-site residue. Residues Asp231–Gln254 are disordered.

This sequence belongs to the class I-like SAM-binding methyltransferase superfamily. RNA methyltransferase RlmE family.

The protein resides in the cytoplasm. It carries out the reaction uridine(2552) in 23S rRNA + S-adenosyl-L-methionine = 2'-O-methyluridine(2552) in 23S rRNA + S-adenosyl-L-homocysteine + H(+). Functionally, specifically methylates the uridine in position 2552 of 23S rRNA at the 2'-O position of the ribose in the fully assembled 50S ribosomal subunit. The polypeptide is Ribosomal RNA large subunit methyltransferase E (Xanthobacter autotrophicus (strain ATCC BAA-1158 / Py2)).